A 121-amino-acid chain; its full sequence is uncharacterized protein (121 aa).

One can recognise an HTH gntR-type domain in the interval 9 to 77 (KPIYLQIADQ…RGQGTFIAEK (69 aa)). The H-T-H motif DNA-binding region spans 37 to 56 (VREMAIQTKVNPNTIQRTYS).

This is an uncharacterized protein from Bacillus subtilis (strain 168).